A 207-amino-acid chain; its full sequence is Small ribosomal subunit protein uS4 (207 aa).

The disordered stretch occupies residues Lys-33 to Asn-54. Positions Gly-42–Gly-53 are enriched in polar residues. Residues Ser-97–Leu-160 enclose the S4 RNA-binding domain.

This sequence belongs to the universal ribosomal protein uS4 family. In terms of assembly, part of the 30S ribosomal subunit. Contacts protein S5. The interaction surface between S4 and S5 is involved in control of translational fidelity.

Functionally, one of the primary rRNA binding proteins, it binds directly to 16S rRNA where it nucleates assembly of the body of the 30S subunit. In terms of biological role, with S5 and S12 plays an important role in translational accuracy. The polypeptide is Small ribosomal subunit protein uS4 (Cupriavidus necator (strain ATCC 17699 / DSM 428 / KCTC 22496 / NCIMB 10442 / H16 / Stanier 337) (Ralstonia eutropha)).